The following is a 430-amino-acid chain: Tol-Pal system protein TolB (430 aa).

A signal peptide spans M1 to A21.

It belongs to the TolB family. In terms of assembly, the Tol-Pal system is composed of five core proteins: the inner membrane proteins TolA, TolQ and TolR, the periplasmic protein TolB and the outer membrane protein Pal. They form a network linking the inner and outer membranes and the peptidoglycan layer.

It is found in the periplasm. Functionally, part of the Tol-Pal system, which plays a role in outer membrane invagination during cell division and is important for maintaining outer membrane integrity. TolB occupies a key intermediary position in the Tol-Pal system because it communicates directly with both membrane-embedded components, Pal in the outer membrane and TolA in the inner membrane. The polypeptide is Tol-Pal system protein TolB (Salmonella typhi).